The following is a 557-amino-acid chain: CDP-diacylglycerol--glycerol-3-phosphate 3-phosphatidyltransferase, mitochondrial (557 aa).

Residues 1-25 (MAAAGGAALWRRLAAWLPRGPPGLA) constitute a mitochondrion transit peptide. Position 121-128 (121-128 (ASLYLGTG)) interacts with ATP. Positions 212–238 (TIGLQHIKVYLFDDNVILSGANLSDLY) constitute a PLD phosphodiesterase 1 domain. Residues His217, Lys219, and Asp224 contribute to the active site. The segment at 322 to 346 (TFHSSQQGSSMLPQHDSEASEGLKP) is disordered. Polar residues predominate over residues 323–333 (FHSSQQGSSML). Positions 336 to 346 (HDSEASEGLKP) are enriched in basic and acidic residues. The 34-residue stretch at 461-494 (AGWTFHAKGLWLYLAGSSLPCLTLIGSPNFGYRS) folds into the PLD phosphodiesterase 2 domain.

The protein belongs to the CDP-alcohol phosphatidyltransferase class-II family.

It is found in the mitochondrion. It carries out the reaction a CDP-1,2-diacyl-sn-glycerol + sn-glycerol 3-phosphate = a 1,2-diacyl-sn-glycero-3-phospho-(1'-sn-glycero-3'-phosphate) + CMP + H(+). The protein operates within phospholipid metabolism; phosphatidylglycerol biosynthesis; phosphatidylglycerol from CDP-diacylglycerol: step 1/2. With respect to regulation, activated by calcium and magnesium and inhibited by other bivalent cations. Its function is as follows. Functions in the biosynthesis of the anionic phospholipids phosphatidylglycerol and cardiolipin. This Gallus gallus (Chicken) protein is CDP-diacylglycerol--glycerol-3-phosphate 3-phosphatidyltransferase, mitochondrial (PGS1).